The primary structure comprises 202 residues: GTP cyclohydrolase-2 (202 aa).

49–53 serves as a coordination point for GTP; sequence RIHSE. The Zn(2+) site is built by C54, C65, and C67. Residues Q70, 92-94, and T114 each bind GTP; that span reads EGR. The active-site Proton acceptor is the D126. R128 (nucleophile) is an active-site residue. GTP contacts are provided by T149 and K154.

Belongs to the GTP cyclohydrolase II family. The cofactor is Zn(2+).

It catalyses the reaction GTP + 4 H2O = 2,5-diamino-6-hydroxy-4-(5-phosphoribosylamino)-pyrimidine + formate + 2 phosphate + 3 H(+). Its pathway is cofactor biosynthesis; riboflavin biosynthesis; 5-amino-6-(D-ribitylamino)uracil from GTP: step 1/4. In terms of biological role, catalyzes the conversion of GTP to 2,5-diamino-6-ribosylamino-4(3H)-pyrimidinone 5'-phosphate (DARP), formate and pyrophosphate. The polypeptide is GTP cyclohydrolase-2 (Shewanella frigidimarina (strain NCIMB 400)).